A 485-amino-acid chain; its full sequence is Catalase isozyme 1 (485 aa).

Active-site residues include His58 and Asn131. Tyr341 lines the heme pocket.

The protein belongs to the catalase family. As to quaternary structure, homotetramer. Heme is required as a cofactor.

The protein localises to the peroxisome. It carries out the reaction 2 H2O2 = O2 + 2 H2O. Occurs in almost all aerobically respiring organisms and serves to protect cells from the toxic effects of hydrogen peroxide. This is Catalase isozyme 1 (CAT1) from Nicotiana plumbaginifolia (Leadwort-leaved tobacco).